An 813-amino-acid chain; its full sequence is Nuclear cap-binding protein subunit 1 (813 aa).

The region spanning 31 to 243 (EERLETLILR…CLWAQIRKLR (213 aa)) is the MIF4G domain. A disordered region spans residues 667 to 716 (KERLDRNAESSSSESEEETAPAGTDAVTPQRRRKKPIGDNADKPTEEQVE). Residues 702 to 716 (PIGDNADKPTEEQVE) show a composition bias toward basic and acidic residues.

The protein belongs to the NCBP1 family. As to quaternary structure, component of the nuclear cap-binding complex (CBC), a heterodimer composed of Cbp80 and Cbp20 that interacts with m7GpppG-capped RNA.

The protein resides in the nucleus. Component of the cap-binding complex (CBC), which binds cotranscriptionally to the 5'-cap of pre-mRNAs and is involved in various processes such as pre-mRNA splicing and RNA-mediated gene silencing (RNAi). The CBC complex is involved in miRNA-mediated RNA interference and is required for primary microRNAs (miRNAs) processing. Also involved in innate immunity via the short interfering RNAs (siRNAs) processing machinery by restricting the viral RNA production. In the CBC complex, Cbp80 does not bind directly capped RNAs (m7GpppG-capped RNA) but is required to stabilize the movement of the N-terminal loop of Cbp20 and lock the CBC into a high affinity cap-binding state with the cap structure. The chain is Nuclear cap-binding protein subunit 1 (Cbp80) from Aedes aegypti (Yellowfever mosquito).